Here is a 597-residue protein sequence, read N- to C-terminus: Aspartate--tRNA(Asp/Asn) ligase (597 aa).

Residue E175 coordinates L-aspartate. The tract at residues 199–202 is aspartate; it reads QQYK. L-aspartate is bound by residues R221 and H456. ATP is bound at residue 221-223; it reads RDE. E490 contacts ATP. An L-aspartate-binding site is contributed by R497. 542 to 545 contacts ATP; sequence GVDR.

Belongs to the class-II aminoacyl-tRNA synthetase family. Type 1 subfamily. In terms of assembly, homodimer.

The protein resides in the cytoplasm. The enzyme catalyses tRNA(Asx) + L-aspartate + ATP = L-aspartyl-tRNA(Asx) + AMP + diphosphate. Its function is as follows. Aspartyl-tRNA synthetase with relaxed tRNA specificity since it is able to aspartylate not only its cognate tRNA(Asp) but also tRNA(Asn). Reaction proceeds in two steps: L-aspartate is first activated by ATP to form Asp-AMP and then transferred to the acceptor end of tRNA(Asp/Asn). This Beijerinckia indica subsp. indica (strain ATCC 9039 / DSM 1715 / NCIMB 8712) protein is Aspartate--tRNA(Asp/Asn) ligase.